Reading from the N-terminus, the 369-residue chain is Anhydro-N-acetylmuramic acid kinase (369 aa).

12-19 lines the ATP pocket; sequence GTSMDGVD.

This sequence belongs to the anhydro-N-acetylmuramic acid kinase family.

It catalyses the reaction 1,6-anhydro-N-acetyl-beta-muramate + ATP + H2O = N-acetyl-D-muramate 6-phosphate + ADP + H(+). It functions in the pathway amino-sugar metabolism; 1,6-anhydro-N-acetylmuramate degradation. The protein operates within cell wall biogenesis; peptidoglycan recycling. Catalyzes the specific phosphorylation of 1,6-anhydro-N-acetylmuramic acid (anhMurNAc) with the simultaneous cleavage of the 1,6-anhydro ring, generating MurNAc-6-P. Is required for the utilization of anhMurNAc either imported from the medium or derived from its own cell wall murein, and thus plays a role in cell wall recycling. The chain is Anhydro-N-acetylmuramic acid kinase from Shewanella woodyi (strain ATCC 51908 / MS32).